An 81-amino-acid chain; its full sequence is MSGTTGERPFSDIVTSIRYWVIHSITIPMLFIAGWLFVSTGLAYDAFGTPRPDEYFTQTRQELPILQERYDINQEIQEFNQ.

Positions 18 and 23 each coordinate heme. Residues 19 to 40 traverse the membrane as a helical segment; that stretch reads YWVIHSITIPMLFIAGWLFVST.

The protein belongs to the PsbE/PsbF family. Heterodimer of an alpha subunit and a beta subunit. PSII is composed of 1 copy each of membrane proteins PsbA, PsbB, PsbC, PsbD, PsbE, PsbF, PsbH, PsbI, PsbJ, PsbK, PsbL, PsbM, PsbT, PsbX, PsbY, PsbZ, Psb30/Ycf12, peripheral proteins PsbO, CyanoQ (PsbQ), PsbU, PsbV and a large number of cofactors. It forms dimeric complexes. Heme b serves as cofactor.

The protein resides in the cellular thylakoid membrane. This b-type cytochrome is tightly associated with the reaction center of photosystem II (PSII). PSII is a light-driven water:plastoquinone oxidoreductase that uses light energy to abstract electrons from H(2)O, generating O(2) and a proton gradient subsequently used for ATP formation. It consists of a core antenna complex that captures photons, and an electron transfer chain that converts photonic excitation into a charge separation. In Synechocystis sp. (strain ATCC 27184 / PCC 6803 / Kazusa), this protein is Cytochrome b559 subunit alpha.